The primary structure comprises 274 residues: Outer surface protein A (274 aa).

Positions 1-16 (MKKYLLGIGLILALIA) are cleaved as a signal peptide. The N-palmitoyl cysteine moiety is linked to residue Cys-17. Cys-17 is lipidated: S-diacylglycerol cysteine.

The protein belongs to the OspA lipoprotein family.

Its subcellular location is the cell outer membrane. The protein resides in the cell surface. This is Outer surface protein A from Borreliella burgdorferi (Lyme disease spirochete).